A 314-amino-acid polypeptide reads, in one-letter code: Methionyl-tRNA formyltransferase (314 aa).

110–113 (SLLP) serves as a coordination point for (6S)-5,6,7,8-tetrahydrofolate.

The protein belongs to the Fmt family.

It catalyses the reaction L-methionyl-tRNA(fMet) + (6R)-10-formyltetrahydrofolate = N-formyl-L-methionyl-tRNA(fMet) + (6S)-5,6,7,8-tetrahydrofolate + H(+). Attaches a formyl group to the free amino group of methionyl-tRNA(fMet). The formyl group appears to play a dual role in the initiator identity of N-formylmethionyl-tRNA by promoting its recognition by IF2 and preventing the misappropriation of this tRNA by the elongation apparatus. The sequence is that of Methionyl-tRNA formyltransferase from Levilactobacillus brevis (strain ATCC 367 / BCRC 12310 / CIP 105137 / JCM 1170 / LMG 11437 / NCIMB 947 / NCTC 947) (Lactobacillus brevis).